Here is a 616-residue protein sequence, read N- to C-terminus: Chaperone protein HscA (616 aa).

This sequence belongs to the heat shock protein 70 family.

Its function is as follows. Chaperone involved in the maturation of iron-sulfur cluster-containing proteins. Has a low intrinsic ATPase activity which is markedly stimulated by HscB. Involved in the maturation of IscU. This Salmonella paratyphi B (strain ATCC BAA-1250 / SPB7) protein is Chaperone protein HscA.